Reading from the N-terminus, the 77-residue chain is Apelin (77 aa).

Residues 1-22 (MNVKILTLVIVLVVSLLCSASA) form the signal peptide. Positions 21–77 (SAGPMASTEHSKEIEEVGSMRTPLRQNPARAGRSQRPAGWRRRRPRPRLSHKGPMPF) are disordered. Over residues 59 to 71 (GWRRRRPRPRLSH) the composition is skewed to basic residues.

It belongs to the apelin family.

Its subcellular location is the secreted. The protein localises to the extracellular space. Peptide hormone that functions as endogenous ligand for the G-protein-coupled apelin receptor (aplnra and/or aplnrb), that plays a role in cadiovascular homeostasis. Functions as a balanced agonist activating both G(i) protein pathway and beta-arrestin pathway of APLNR. Downstream G proteins activation, apelin can inhibit cAMP production and activate key intracellular effectors such as ERKs. On the other hand, APLNR activation induces beta-arrestin recruitment to the membrane leading to desensitization and internalization of the receptor. Apelin blunts cardiac hypertrophic induction from APLNR on response to pathological stimuli, but also induces myocardial hypertrophy under normal conditions. Involved in the regulation of cardiac precursor cell movements during gastrulation and heart morphogenesis. Plays a role in early coronary blood vessels formation. Mediates myocardial contractility in an ERK1/2-dependent manner. May also have a role in the central control of body fluid homeostasis. This Danio rerio (Zebrafish) protein is Apelin.